The primary structure comprises 1006 residues: Transcription factor tau subunit sfc4 (1006 aa).

Residues 64 to 91 are disordered; sequence GLWSDEESDYEGSDDESNFSKTASRTED. Acidic residues predominate over residues 66 to 80; it reads WSDEESDYEGSDDES. TPR repeat units follow at residues 133 to 166, 205 to 238, 277 to 310, 396 to 429, 431 to 464, and 466 to 499; these read QQML…DNNV, HELW…KPPN, ASIL…FYQY, HLFR…PPDY, WGML…EPAQ, and IGLW…DNSN. Residues 506 to 554 are a coiled coil; the sequence is LAEINELQDNRDAALEIVTNIFEQRRNINELEREQSQNEDHEKNVGSQL. 2 TPR repeats span residues 841 to 874 and 924 to 957; these read PVLV…NPDC and QEAL…SPMS.

In terms of assembly, component of the TFIIIC complex including sfc1, sfc3, sfc4, sfc6 and sfc7. The subunits are organized in two globular domains, tauA and tauB, connected by a proteolysis-sensitive and flexible linker. Interacts with sfc1, sfc3 and sfc6. Phosphorylated.

It localises to the nucleus. Functionally, TFIIIC mediates tRNA and 5S RNA gene activation by binding to intragenic promoter elements. Upstream of the transcription start site, TFIIIC assembles the initiation complex TFIIIB-TFIIIC-tDNA, which is sufficient for RNA polymerase III recruitment and function. Part of the tauA domain of TFIIIC that binds boxA DNA promoter sites of tRNA and similar genes. Sfc4 is the TFIIIB assembling subunit of TFIIIC. The chain is Transcription factor tau subunit sfc4 from Schizosaccharomyces pombe (strain 972 / ATCC 24843) (Fission yeast).